A 572-amino-acid polypeptide reads, in one-letter code: Glutathione hydrolase 5 proenzyme (572 aa).

Over 1-6 (MAWGHR) the chain is Cytoplasmic. A helical; Signal-anchor for type II membrane protein transmembrane segment spans residues 7–29 (TTVCLVLLGVSLGLAIIVLAVVL). Topologically, residues 30–572 (PHHQASCRPD…LRKAGKASGY (543 aa)) are extracellular. A glycan (N-linked (GlcNAc...) asparagine) is linked at asparagine 98. Arginine 110 lines the L-glutamate pocket. Asparagine 185, asparagine 194, asparagine 204, asparagine 277, asparagine 303, asparagine 347, and asparagine 377 each carry an N-linked (GlcNAc...) asparagine glycan. Threonine 388 functions as the Nucleophile in the catalytic mechanism. L-glutamate contacts are provided by residues threonine 406, glutamate 427, and 453–454 (SS).

This sequence belongs to the gamma-glutamyltransferase family. As to quaternary structure, heterodimer composed of the light and heavy chains. The active site is located in the light chain. Post-translationally, cleaved by autocatalysis into a large and a small subunit. Glycosylated. Widely expressed, but at low level, except in the airway epithelial cells. Detected in brain, heart, kidney, liver, lung, spleen, testis and trachea.

The protein localises to the membrane. It catalyses the reaction glutathione + H2O = L-cysteinylglycine + L-glutamate. It carries out the reaction an S-substituted glutathione + H2O = an S-substituted L-cysteinylglycine + L-glutamate. The enzyme catalyses leukotriene C4 + H2O = leukotriene D4 + L-glutamate. The catalysed reaction is S-[(2E,6E,10E)-geranylgeranyl]-L-glutathione + H2O = S-[(2E,6E,10E)-geranylgeranyl]-L-cysteinylglycine + L-glutamate. It catalyses the reaction an N-terminal (5-L-glutamyl)-[peptide] + an alpha-amino acid = 5-L-glutamyl amino acid + an N-terminal L-alpha-aminoacyl-[peptide]. It participates in lipid metabolism; leukotriene D4 biosynthesis. Its pathway is sulfur metabolism; glutathione metabolism. Inhibited by serine-borate. In terms of biological role, cleaves the gamma-glutamyl bond of extracellular glutathione tripeptide (gamma-Glu-Cys-Gly) and certain glutathione conjugates. Hydrolyzes glutathione releasing L-Glu and Cys-Gly dipeptide which is further metabolized to maintain extracellular cysteine levels but also to provide cysteine necessary for intracellular glutathione synthesis. Among glutathione-S-conjugates metabolizes leukotriene C4 (LTC4) and S-geranylgeranyl-glutathione (GGG), but is inactive toward gamma-glutamyl leucine. Converts extracellular LTC4 to LTD4 during acute inflammatory response. Acts as a negative regulator of GGG bioactivity. GGT5 (via GGG catabolism) and ABCC1 (via extracellular transport) establish GGG gradients within lymphoid tissues to position P2RY8-positive lymphocytes at germinal centers in lymphoid follicles and restrict their chemotactic transmigration from blood vessels to bone marrow parenchyma. The transpeptidation reaction, i.e. the transfer of gamma-glutamyl moiety to an acceptor molecule to yield a new gamma-glutamyl compound requires high concentration of dipeptide acceptor and is considered nonphysiological. The sequence is that of Glutathione hydrolase 5 proenzyme (Ggt5) from Rattus norvegicus (Rat).